Reading from the N-terminus, the 738-residue chain is Protein Aster-B (738 aa).

The tract at residues 1 to 81 (MKGFKLSCTA…SGGKNSKKSQ (81 aa)) is disordered. Over residues 8 to 19 (CTASNSNRSTPA) the composition is skewed to polar residues. A phosphoserine mark is found at serine 28 and serine 30. Basic and acidic residues predominate over residues 41–51 (MVEKGSDHSSD). Over residues 59–70 (QGVQRSCSSQSG) the composition is skewed to low complexity. One can recognise a GRAM domain in the interval 96–163 (EDFRKLFKQL…KDICSMTKEK (68 aa)). Positions 254 to 299 (EENEVNDSSSKSSIETKPDASPQLPKKSITNSTLTSTGSSEAPVSF) are disordered. Residues 259–268 (NDSSSKSSIE) show a composition bias toward polar residues. Phosphoserine is present on serine 274. Over residues 281–295 (SITNSTLTSTGSSEA) the composition is skewed to polar residues. One can recognise a VASt domain in the interval 372 to 543 (SGRQYVNEVF…ELTKTESTYL (172 aa)). The residue at position 389 (tyrosine 389) is a Phosphotyrosine. Serine 550 and serine 581 each carry phosphoserine. 3 positions are modified to phosphothreonine: threonine 584, threonine 585, and threonine 587. Residues 623 to 643 (LLLVISCVICFSLVLLVVLNM) traverse the membrane as a helical segment.

In terms of tissue distribution, highly expressed in the adrenal gland (at protein level) and brain. Also found in the kidney, testis and macrophages.

The protein localises to the endoplasmic reticulum membrane. It is found in the cell membrane. Functionally, cholesterol transporter that mediates non-vesicular transport of cholesterol from the plasma membrane (PM) to the endoplasmic reticulum (ER). Contains unique domains for binding cholesterol and the PM, thereby serving as a molecular bridge for the transfer of cholesterol from the PM to the ER. Plays a crucial role in cholesterol homeostasis in the adrenal gland and has the unique ability to localize to the PM based on the level of membrane cholesterol. In lipid-poor conditions localizes to the ER membrane and in response to excess cholesterol in the PM is recruited to the endoplasmic reticulum-plasma membrane contact sites (EPCS) which is mediated by the GRAM domain. At the EPCS, the sterol-binding VASt/ASTER domain binds to the cholesterol in the PM and facilitates its transfer from the PM to ER. This chain is Protein Aster-B (Gramd1b), found in Mus musculus (Mouse).